Here is a 271-residue protein sequence, read N- to C-terminus: 4-hydroxy-tetrahydrodipicolinate reductase (271 aa).

10–15 (GAAGRM) provides a ligand contact to NAD(+). NADP(+) is bound at residue arginine 37. NAD(+) is bound by residues 100-102 (GTT) and 124-127 (SGNM). Histidine 157 (proton donor/acceptor) is an active-site residue. Histidine 158 contacts (S)-2,3,4,5-tetrahydrodipicolinate. Lysine 161 serves as the catalytic Proton donor. Residue 167 to 168 (GT) participates in (S)-2,3,4,5-tetrahydrodipicolinate binding. Residues 183-202 (SLSEHEQRGRDGHTGPRKDG) are disordered. Over residues 185-202 (SEHEQRGRDGHTGPRKDG) the composition is skewed to basic and acidic residues.

It belongs to the DapB family.

It is found in the cytoplasm. It catalyses the reaction (S)-2,3,4,5-tetrahydrodipicolinate + NAD(+) + H2O = (2S,4S)-4-hydroxy-2,3,4,5-tetrahydrodipicolinate + NADH + H(+). It carries out the reaction (S)-2,3,4,5-tetrahydrodipicolinate + NADP(+) + H2O = (2S,4S)-4-hydroxy-2,3,4,5-tetrahydrodipicolinate + NADPH + H(+). Its pathway is amino-acid biosynthesis; L-lysine biosynthesis via DAP pathway; (S)-tetrahydrodipicolinate from L-aspartate: step 4/4. Its function is as follows. Catalyzes the conversion of 4-hydroxy-tetrahydrodipicolinate (HTPA) to tetrahydrodipicolinate. The polypeptide is 4-hydroxy-tetrahydrodipicolinate reductase (Beijerinckia indica subsp. indica (strain ATCC 9039 / DSM 1715 / NCIMB 8712)).